The following is a 288-amino-acid chain: Polyprenyl transferase eriF (288 aa).

The next 6 helical transmembrane spans lie at 24–44, 51–71, 101–121, 145–165, 215–235, and 268–288; these read ASII…TLPL, YIFL…LNQV, IAAF…LPET, CIAM…AISP, FIIT…GGIF, and FYTY…HGLI.

This sequence belongs to the UbiA prenyltransferase family. Mg(2+) serves as cofactor.

It localises to the membrane. Functionally, polyprenyl transferase; part of the gene cluster that mediates the biosynthesis of erinacines, cyathane-xylosides that show unique biological activities, including leishmanicidal activity, stimulating activity for nerve growth-factor synthesis, and agonistic activity toward the kappa opioid receptor. The role of eriF within the pathway has still to be determined. The first step of the erinacines biosynthesis pathway is catalyzed by the geranylgeranyl diphosphate (GGPP) synthase eriE via conversion of farnesyl pyrophosphate and isopentyl pyrophosphate into geranylgeranyl pyrophosphate (GGPP). GGPP is then substrate of the diterpene cyclase eriG for the production of cyatha-3,12-diene. The cytochrome P450 monooxygenase eriI then hydroxylates cyatha-3,12-diene at C-14 of the seven-membered ring to produce erinacol, which is further hydroxylated at C-15 by the cytochrome P450 monooxygenase eriC to yield cyathadiol. The cytochrome P450 monooxygenase eriA then catalyzes C-11 hydroxylation in the presence of the short chain dehydrogenase/reductase (SDR) eriH, which leads to the production of cyathatriol. The acetyltransferase eriL converts cyathatriol into 11-O-acetyl-cyathatriol. The SDR eriH catalyzes further oxidation of 11-O-acetyl-cyathatriol into 1-O-acetylcyathin A3. Finally, the glycosyl transferase eriJ tranfers xylose from UDP-xylose onto C-14 of 11-O-acetyl-cyathatriol to form eracine Q. EriJ is also able to convert 11-O-acetyl-cyathatriol to eracine Q2 by using UDP-D-glucose as cosubstrate, but at a lower rate. The chain is Polyprenyl transferase eriF from Hericium erinaceus (Lion's mane mushroom).